The sequence spans 429 residues: Protein FAM98B (429 aa).

Residues 304 to 429 (RVPDRGGRPN…GGGGGGYRRY (126 aa)) form a disordered region. Residues 305 to 314 (VPDRGGRPNE) are compositionally biased toward basic and acidic residues. The span at 332–429 (GGRGGWGGGG…GGGGGGYRRY (98 aa)) shows a compositional bias: gly residues.

It belongs to the FAM98 family. As to quaternary structure, homodimer. Component of a tRNA-splicing ligase complex. Interacts with FAM98A.

The protein localises to the nucleus. The protein resides in the cytoplasm. Its function is as follows. Positively stimulates PRMT1-induced protein arginine dimethylated arginine methylation. The chain is Protein FAM98B (Fam98b) from Mus musculus (Mouse).